The following is a 190-amino-acid chain: Xanthine phosphoribosyltransferase (190 aa).

Positions 20 and 27 each coordinate xanthine. 128–132 provides a ligand contact to 5-phospho-alpha-D-ribose 1-diphosphate; it reads ANGKA. Position 156 (Lys-156) interacts with xanthine.

The protein belongs to the purine/pyrimidine phosphoribosyltransferase family. Xpt subfamily. As to quaternary structure, homodimer.

The protein localises to the cytoplasm. It catalyses the reaction XMP + diphosphate = xanthine + 5-phospho-alpha-D-ribose 1-diphosphate. It functions in the pathway purine metabolism; XMP biosynthesis via salvage pathway; XMP from xanthine: step 1/1. In terms of biological role, converts the preformed base xanthine, a product of nucleic acid breakdown, to xanthosine 5'-monophosphate (XMP), so it can be reused for RNA or DNA synthesis. The sequence is that of Xanthine phosphoribosyltransferase from Pseudomonas entomophila (strain L48).